Here is a 152-residue protein sequence, read N- to C-terminus: ADP-ribose glycohydrolase OARD1 (152 aa).

Residue Ala2 is modified to N-acetylalanine. Residues 2 to 152 (AGSPNEDSEG…TDIRITVYTL (151 aa)) form the Macro domain. The residue at position 4 (Ser4) is a Phosphoserine. Residue Leu21 participates in substrate binding. The active-site Nucleophile is the Lys84. Substrate contacts are provided by residues 119-125 (RIGCGLD) and Leu152. Asp125 (proton acceptor) is an active-site residue.

It localises to the nucleus. It is found in the nucleoplasm. The protein localises to the nucleolus. The protein resides in the chromosome. The enzyme catalyses 2''-O-acetyl-ADP-D-ribose + H2O = ADP-D-ribose + acetate + H(+). The catalysed reaction is 5-O-(ADP-D-ribosyl)-L-glutamyl-[protein] + H2O = L-glutamyl-[protein] + ADP-D-ribose + H(+). It catalyses the reaction alpha-NAD(+) + H2O = ADP-D-ribose + nicotinamide + H(+). Subject to competitive inhibition by the product ADP-ribose. Functionally, ADP-ribose glycohydrolase that hydrolyzes ADP-ribose and acts on different substrates, such as proteins ADP-ribosylated on glutamate and O-acetyl-ADP-D-ribose. Specifically acts as a glutamate mono-ADP-ribosylhydrolase by mediating the removal of mono-ADP-ribose attached to glutamate residues on proteins. Does not act on poly-ADP-ribosylated proteins: the poly-ADP-ribose chain of poly-ADP-ribosylated glutamate residues must by hydrolyzed into mono-ADP-ribosylated glutamate by PARG to become a substrate for OARD1. Deacetylates O-acetyl-ADP ribose, a signaling molecule generated by the deacetylation of acetylated lysine residues in histones and other proteins. Catalyzes the deacylation of O-acetyl-ADP-ribose, O-propionyl-ADP-ribose and O-butyryl-ADP-ribose, yielding ADP-ribose plus acetate, propionate and butyrate, respectively. This chain is ADP-ribose glycohydrolase OARD1, found in Bos taurus (Bovine).